The primary structure comprises 293 residues: Small ribosomal subunit biogenesis GTPase RsgA 2 (293 aa).

The CP-type G domain occupies 63-223 (SNELVRPPIA…VADTPGFSVL (161 aa)). GTP-binding positions include 112–115 (TKVD) and 166–174 (GQSGVGKSS). The Zn(2+) site is built by Cys-247, Cys-252, His-254, and Cys-260.

Belongs to the TRAFAC class YlqF/YawG GTPase family. RsgA subfamily. As to quaternary structure, monomer. Associates with 30S ribosomal subunit, binds 16S rRNA. It depends on Zn(2+) as a cofactor.

Its subcellular location is the cytoplasm. One of several proteins that assist in the late maturation steps of the functional core of the 30S ribosomal subunit. Helps release RbfA from mature subunits. May play a role in the assembly of ribosomal proteins into the subunit. Circularly permuted GTPase that catalyzes slow GTP hydrolysis, GTPase activity is stimulated by the 30S ribosomal subunit. In Oceanobacillus iheyensis (strain DSM 14371 / CIP 107618 / JCM 11309 / KCTC 3954 / HTE831), this protein is Small ribosomal subunit biogenesis GTPase RsgA 2.